The primary structure comprises 583 residues: Aspartate--tRNA ligase (583 aa).

Residue Glu-174 coordinates L-aspartate. Residues 198-201 (QITK) form an aspartate region. Arg-220 serves as a coordination point for L-aspartate. Residues 220 to 222 (RDE) and Gln-229 contribute to the ATP site. Residue His-443 coordinates L-aspartate. Glu-477 is a binding site for ATP. Residue Arg-484 participates in L-aspartate binding. 529 to 532 (GLDR) is an ATP binding site.

It belongs to the class-II aminoacyl-tRNA synthetase family. Type 1 subfamily. Homodimer.

It localises to the cytoplasm. It carries out the reaction tRNA(Asp) + L-aspartate + ATP = L-aspartyl-tRNA(Asp) + AMP + diphosphate. In terms of biological role, catalyzes the attachment of L-aspartate to tRNA(Asp) in a two-step reaction: L-aspartate is first activated by ATP to form Asp-AMP and then transferred to the acceptor end of tRNA(Asp). The protein is Aspartate--tRNA ligase of Streptococcus thermophilus (strain ATCC BAA-491 / LMD-9).